The chain runs to 786 residues: MLERTLRVLEYNKVKEQLLEHTASSLGRDKVKNLVPSTDFEEIVELQETTDEAAKVIRLKGHVPLGGISDIRANIKRAKIGSMLSPHELIEIASTMYGSRQMKRFIDDMIDNGVELPILETHVAQIVSLYDLEKKITNCIGDGGEVVDSASDKLRGIRNQIRTAESRIREKLENMTRSSNAQKMLSDAIVTIRNERYVIPVKQEYRGVYGGIVHDQSASGQTLFIEPQVIVELNNALQEARVKEKQEVERILMMLTEEVAVEADIVLSNVEVVANLDFIFAKALYAKRIKATKPIVNNERYMDLKQARHPLIDPEIIVPNNIMLGKDFTTIVITGPNTGGKTVTLKTVGICVLMAQSGLHIPVMDESEICVFKNIFADIGDEQSIEQNLSTFSSHMVNIVDILEKADFESLVLFDELGAGTDPQEGAALAISILDEVCNRGARVVATTHYPELKAYGYNREQVINASVEFDVNTLSPTYKLLIGVPGRSNAFEISKRLGLSDRVIDRARNHISTDTNKIENMIAKLEESQKNAERERKEAEEHRKQSEKLHRELQRQIIEFNDERDEKLLKAQKEGEEKVEAAKQEAEGIIQELRQLRKAQLINVKDHELIEAKSRLEGAAPELVKKQKVNVKNTAPKQQLRSGDEVKVLTFGQKGQLLEKVSDTEWSVQIGILKMKVKESNMEYINTPKQTEKKAVASVKGRDYHVSLELDLRGERYEDAMMRVEKYLDDAQLASYPRVSIIHGKGTGALRQGVQDYLKKHRGVKTYRYGDMGEGGLGVTVVELK.

335-342 (GPNTGGKT) provides a ligand contact to ATP. Residues 529–549 (SQKNAERERKEAEEHRKQSEK) are disordered. The 76-residue stretch at 711–786 (LDLRGERYED…GLGVTVVELK (76 aa)) folds into the Smr domain.

This sequence belongs to the DNA mismatch repair MutS family. MutS2 subfamily. Homodimer. Binds to stalled ribosomes, contacting rRNA.

Functionally, endonuclease that is involved in the suppression of homologous recombination and thus may have a key role in the control of bacterial genetic diversity. Acts as a ribosome collision sensor, splitting the ribosome into its 2 subunits. Detects stalled/collided 70S ribosomes which it binds and splits by an ATP-hydrolysis driven conformational change. Acts upstream of the ribosome quality control system (RQC), a ribosome-associated complex that mediates the extraction of incompletely synthesized nascent chains from stalled ribosomes and their subsequent degradation. Probably generates substrates for RQC. In Bacillus mycoides (strain KBAB4) (Bacillus weihenstephanensis), this protein is Endonuclease MutS2.